Here is a 461-residue protein sequence, read N- to C-terminus: tRNA modification GTPase MnmE (461 aa).

Positions 23, 88, and 127 each coordinate (6S)-5-formyl-5,6,7,8-tetrahydrofolate. The TrmE-type G domain maps to 223 to 383 (GLNTVIVGKP…LKECIKNLFF (161 aa)). Asn-233 contacts K(+). Residues 233–238 (NVGKSS), 252–258 (TEIPGTT), and 277–280 (DTAG) contribute to the GTP site. Mg(2+) is bound at residue Ser-237. Residues Thr-252, Ile-254, and Thr-257 each coordinate K(+). Thr-258 contacts Mg(2+). (6S)-5-formyl-5,6,7,8-tetrahydrofolate is bound at residue Lys-461.

This sequence belongs to the TRAFAC class TrmE-Era-EngA-EngB-Septin-like GTPase superfamily. TrmE GTPase family. Homodimer. Heterotetramer of two MnmE and two MnmG subunits. The cofactor is K(+).

It is found in the cytoplasm. In terms of biological role, exhibits a very high intrinsic GTPase hydrolysis rate. Involved in the addition of a carboxymethylaminomethyl (cmnm) group at the wobble position (U34) of certain tRNAs, forming tRNA-cmnm(5)s(2)U34. The sequence is that of tRNA modification GTPase MnmE from Clostridium botulinum (strain Langeland / NCTC 10281 / Type F).